The primary structure comprises 201 residues: MDKFTTLEGVAAPLKIINVDTDMIIPKQYLKTIKRTGLGKGLFSEQRYKDDGSENPDFILNKPAYRGAKILVAGDNFGCGSSREHAPWALLDFGIRCVISTSFGDIFYNNCFKNGVLPIRVSQADLDKLFDDAERGSNATMTIDLQAQEIRGPDGGAIKFEIDPFRKHCLINGLDDIGLTLEKKPSIDAYETKLKTERAWA.

It belongs to the LeuD family. LeuD type 1 subfamily. In terms of assembly, heterodimer of LeuC and LeuD.

The enzyme catalyses (2R,3S)-3-isopropylmalate = (2S)-2-isopropylmalate. It functions in the pathway amino-acid biosynthesis; L-leucine biosynthesis; L-leucine from 3-methyl-2-oxobutanoate: step 2/4. In terms of biological role, catalyzes the isomerization between 2-isopropylmalate and 3-isopropylmalate, via the formation of 2-isopropylmaleate. The sequence is that of 3-isopropylmalate dehydratase small subunit from Rhodopseudomonas palustris (strain ATCC BAA-98 / CGA009).